The sequence spans 319 residues: uncharacterized protein (319 aa).

Residues 268-312 (SSVVAVTHPPSTTSTTTSVSETLSSFIAPSDLSSQPSPSSHPSSP) show a composition bias toward low complexity. Positions 268–319 (SSVVAVTHPPSTTSTTTSVSETLSSFIAPSDLSSQPSPSSHPSSPFGNHNEF) are disordered.

This is an uncharacterized protein from Lepidoptera (butterflies and moths).